Consider the following 108-residue polypeptide: Nucleoid-associated protein CPS_3743 (108 aa).

The interval 87-108 (NKDKMGALTGGMQLPPGMKMPF) is disordered.

This sequence belongs to the YbaB/EbfC family. In terms of assembly, homodimer.

Its subcellular location is the cytoplasm. The protein resides in the nucleoid. Its function is as follows. Binds to DNA and alters its conformation. May be involved in regulation of gene expression, nucleoid organization and DNA protection. In Colwellia psychrerythraea (strain 34H / ATCC BAA-681) (Vibrio psychroerythus), this protein is Nucleoid-associated protein CPS_3743.